A 329-amino-acid chain; its full sequence is MALQSCCSSSASVPATCSALCLAEATRAASLFVRPRAAARRLVLARCARGREGGESKAVQLVLGGRARDDGSESESSDDEDDDEPMQMTDEQRRTLRRKIREMMDRVPETAEITDPAERKAKMLELLTKYQLVVEEEDPNWPEDDEDGHGFSLGQFFDKITIKAEKKNDDDEEDDAKGNQSDKEIVWEDDNYIKPIRDVKTMDWDDTVFTDFGPLIVLVHNRYKRPQDNENARDQLVKAIEMFWEYNLPSPRCVAVDACAEPDLVKALNVSGFPEVLFTNAGKIVHRDKVVRSAEEWTRMMAFFYYKAARPPCLSEADGQGQEKVPLMS.

The N-terminal 46 residues, 1–46 (MALQSCCSSSASVPATCSALCLAEATRAASLFVRPRAAARRLVLAR), are a transit peptide targeting the chloroplast. Residues 58-91 (AVQLVLGGRARDDGSESESSDDEDDDEPMQMTDE) form a disordered region. Acidic residues predominate over residues 72–85 (SESESSDDEDDDEP).

It localises to the plastid. It is found in the chloroplast stroma. Its function is as follows. Plays an essential role in early steps of chloroplast development. Involved in the regulation of plastid gene expression. Required for the proper function of the plastid transcriptional machinery and protein accumulation in thylakoid membranes. May function as molecular chaperone to ensure proper organization of the nucleoids in chloroplasts. In Oryza sativa subsp. japonica (Rice), this protein is Thioredoxin-like fold domain-containing protein MRL7L homolog, chloroplastic.